The sequence spans 405 residues: Arginine biosynthesis bifunctional protein ArgJ (405 aa).

Residues threonine 152, lysine 178, threonine 189, glutamate 276, asparagine 400, and threonine 405 each contribute to the substrate site. Catalysis depends on threonine 189, which acts as the Nucleophile.

The protein belongs to the ArgJ family. In terms of assembly, heterotetramer of two alpha and two beta chains.

It localises to the cytoplasm. It carries out the reaction N(2)-acetyl-L-ornithine + L-glutamate = N-acetyl-L-glutamate + L-ornithine. The enzyme catalyses L-glutamate + acetyl-CoA = N-acetyl-L-glutamate + CoA + H(+). It participates in amino-acid biosynthesis; L-arginine biosynthesis; L-ornithine and N-acetyl-L-glutamate from L-glutamate and N(2)-acetyl-L-ornithine (cyclic): step 1/1. It functions in the pathway amino-acid biosynthesis; L-arginine biosynthesis; N(2)-acetyl-L-ornithine from L-glutamate: step 1/4. Catalyzes two activities which are involved in the cyclic version of arginine biosynthesis: the synthesis of N-acetylglutamate from glutamate and acetyl-CoA as the acetyl donor, and of ornithine by transacetylation between N(2)-acetylornithine and glutamate. The protein is Arginine biosynthesis bifunctional protein ArgJ of Pseudomonas putida (strain ATCC 47054 / DSM 6125 / CFBP 8728 / NCIMB 11950 / KT2440).